Reading from the N-terminus, the 397-residue chain is Elongation factor Tu (397 aa).

One can recognise a tr-type G domain in the interval 10 to 206; that stretch reads KPHVNIGTIG…AVDTAIPEPE (197 aa). The segment at 19–26 is G1; sequence GHIDHGKT. 19 to 26 lines the GTP pocket; it reads GHIDHGKT. T26 contacts Mg(2+). Residues 62–66 form a G2 region; the sequence is GITIS. Positions 83-86 are G3; that stretch reads DCPG. GTP contacts are provided by residues 83-87 and 138-141; these read DCPGH and NKAD. Positions 138–141 are G4; sequence NKAD. The interval 176-178 is G5; that stretch reads SAL.

It belongs to the TRAFAC class translation factor GTPase superfamily. Classic translation factor GTPase family. EF-Tu/EF-1A subfamily. In terms of assembly, monomer.

It is found in the cytoplasm. The enzyme catalyses GTP + H2O = GDP + phosphate + H(+). Functionally, GTP hydrolase that promotes the GTP-dependent binding of aminoacyl-tRNA to the A-site of ribosomes during protein biosynthesis. This chain is Elongation factor Tu, found in Kineococcus radiotolerans (strain ATCC BAA-149 / DSM 14245 / SRS30216).